The chain runs to 517 residues: Probable bifunctional methylthioribulose-1-phosphate dehydratase/enolase-phosphatase E1 (517 aa).

The segment at 1–242 is methylthioribulose-1-phosphate dehydratase; that stretch reads MACGGCSCEA…CIKLYQLGID (242 aa). Cysteine 114 lines the substrate pocket. Positions 132 and 134 each coordinate Zn(2+). The active-site Proton donor/acceptor; for methylthioribulose-1-phosphate dehydratase activity is glutamate 157. Histidine 207 is a Zn(2+) binding site. The enolase-phosphatase E1 stretch occupies residues 278–517; that stretch reads VVLDIEGTTT…FRTIKSFSEI (240 aa). Mg(2+) contacts are provided by aspartate 281 and glutamate 283. Substrate contacts are provided by residues 416–417 and lysine 450; that span reads SS. A Mg(2+)-binding site is contributed by aspartate 476.

This sequence in the N-terminal section; belongs to the aldolase class II family. MtnB subfamily. In the C-terminal section; belongs to the HAD-like hydrolase superfamily. MasA/MtnC family. Zn(2+) serves as cofactor. It depends on Mg(2+) as a cofactor.

It carries out the reaction 5-(methylsulfanyl)-D-ribulose 1-phosphate = 5-methylsulfanyl-2,3-dioxopentyl phosphate + H2O. The enzyme catalyses 5-methylsulfanyl-2,3-dioxopentyl phosphate + H2O = 1,2-dihydroxy-5-(methylsulfanyl)pent-1-en-3-one + phosphate. It functions in the pathway amino-acid biosynthesis; L-methionine biosynthesis via salvage pathway; L-methionine from S-methyl-5-thio-alpha-D-ribose 1-phosphate: step 2/6. Its pathway is amino-acid biosynthesis; L-methionine biosynthesis via salvage pathway; L-methionine from S-methyl-5-thio-alpha-D-ribose 1-phosphate: step 3/6. The protein operates within amino-acid biosynthesis; L-methionine biosynthesis via salvage pathway; L-methionine from S-methyl-5-thio-alpha-D-ribose 1-phosphate: step 4/6. This Sorghum bicolor (Sorghum) protein is Probable bifunctional methylthioribulose-1-phosphate dehydratase/enolase-phosphatase E1.